The sequence spans 377 residues: uncharacterized protein (377 aa).

4 helical membrane-spanning segments follow: residues 26–46 (TFQN…VVAI), 67–87 (TVGS…WVII), 108–128 (FLTF…ISLT), and 135–155 (IDYG…ALYI).

It localises to the cell membrane. This is an uncharacterized protein from Methanocaldococcus jannaschii (strain ATCC 43067 / DSM 2661 / JAL-1 / JCM 10045 / NBRC 100440) (Methanococcus jannaschii).